We begin with the raw amino-acid sequence, 168 residues long: MTQHPPGDDRTNRIVAVTLDEESIGRSGPDIEHERAIAIYDLVEENLFAPEGADGQGPFTLHLGITANRLMFDIRKEDGTPVVTHLLSLSPFRRIVKDYFMICDSYYNAIRTATPDKIEAIDMGRRGIHDEGSRTLQERLKGKVRVDFETSRRLFTLITVLHWKGEGQ.

Belongs to the UPF0262 family.

The polypeptide is UPF0262 protein BBta_0898 (Bradyrhizobium sp. (strain BTAi1 / ATCC BAA-1182)).